The following is a 313-amino-acid chain: MNTFSQVWVFSDTPSRLPELMNGAQALANQINTFVLNDADGAQAIQLGANHVWKLNGKPDDRMIEDYASVMADTIRQHGADGLVLLPNTRRGKLLAAKLGYRLKAAVSNDASTVSVQDGKATVKHMVYGGLAIGEERIATPYAVLTISSGTFDAAQPDASRTGETHTVEWQAPAVAITRTATQARQSNSVDLDKARLVVSVGRGIGSKENIALAEQLCKAIGAELACSRPVAENEKWMEHERYVGISNLMLKPELYLAVGISGQIQHMVGANASQTIFAINKDKNAPIFQYADYGIVGDAVKILPALTAALAR.

Residue 255–283 (LYLAVGISGQIQHMVGANASQTIFAINKD) coordinates FAD.

Belongs to the ETF alpha-subunit/FixB family. In terms of assembly, heterodimer of FixA and FixB.

It participates in amine and polyamine metabolism; carnitine metabolism. Its function is as follows. Required for anaerobic carnitine reduction. May bring reductant to CaiA. This Shigella dysenteriae serotype 1 (strain Sd197) protein is Protein FixB.